The chain runs to 256 residues: UPF0246 protein HCH_04801 (256 aa).

Belongs to the UPF0246 family.

In Hahella chejuensis (strain KCTC 2396), this protein is UPF0246 protein HCH_04801.